The chain runs to 1002 residues: Solute carrier family 12 member 3 (1002 aa).

Topologically, residues 1–135 are cytoplasmic; that stretch reads MAELPVTELP…KSPGEPVRFG (135 aa). At Ser41 the chain carries Phosphoserine. Position 44 is a phosphothreonine (Thr44). Ser47 carries the phosphoserine modification. A phosphothreonine mark is found at Thr48, Thr53, and Thr58. Residues Ser71 and Ser89 each carry the phosphoserine modification. At Thr122 the chain carries Phosphothreonine. Ser124 bears the Phosphoserine mark. The discontinuously helical transmembrane segment at 136 to 165 threads the bilayer; that stretch reads WVKGVMIRCMLNIWGVILYLRLPWITAQAG. Positions 146 and 149 each coordinate Na(+). A helical transmembrane segment spans residues 166–187; it reads IVLTWLIILLSVMVTSITGLSI. Residues 188–218 are Cytoplasmic-facing; the sequence is SAISTNGKVKSGGTYFLISRSLGPELGGSIG. Residues 219-241 form a helical membrane-spanning segment; the sequence is LIFAFANAVGVAMHTVGFAETVR. Topologically, residues 242-253 are extracellular; the sequence is DLLQEYGTPIVD. Helical transmembrane passes span 254–278 and 279–301; these read PINDIRIIGVVTVTVLLAISLAGME and WESKAQVLFFLVIMVSFANYLVG. The Extracellular segment spans residues 302 to 336; the sequence is TLIPASEDKASKGFYSYHGDIFVQNLVPDWRGIDG. The discontinuously helical transmembrane segment at 337–358 threads the bilayer; sequence SFFGMFSIFFPSATGILAGANI. Residues Gly351, Ile352, and Leu353 each coordinate chloride. Residues 359–369 lie on the Cytoplasmic side of the membrane; the sequence is SGDLKDPAVAI. The helical transmembrane segment at 370 to 391 threads the bilayer; it reads PKGTLMAIFWTTISYLAISATI. Residues 392-451 lie on the Extracellular side of the membrane; that stretch reads GSCVVRDASGDVNDTMTPGPGPCEGLACGYGWNFTECSQQRSCRYGLINYYQTMSMVSAF. Residue Asn404 is glycosylated (N-linked (GlcNAc...) asparagine). A disulfide bridge connects residues Cys414 and Cys419. Asn424 is a glycosylation site (N-linked (GlcNAc...) asparagine). Cys428 and Cys434 are disulfide-bonded. The helical transmembrane segment at 452 to 475 threads the bilayer; the sequence is APLITAGIFGATLSSALACLVSAA. Ala462, Ser465, and Ser466 together coordinate Na(+). Over 476–505 the chain is Cytoplasmic; the sequence is KVFQCLCEDQLYPLIGFFGKGYGKNREPVR. The chain crosses the membrane as a helical span at residues 506–520; sequence GYLLAYAIAVAFIII. Residues 521 to 525 lie on the Extracellular side of the membrane; sequence AELNT. Residues 526 to 542 traverse the membrane as a helical segment; it reads IAPIISNFFLCSYALIN. Tyr538 lines the chloride pocket. The Cytoplasmic portion of the chain corresponds to 543 to 565; it reads FSCFHASITNSPGWRPSFRYYSK. 2 helical membrane-spanning segments follow: residues 566–585 and 586–597; these read WAALFGAVISVVIMFLLTWW and AALIAIGVVLFL. The Cytoplasmic segment spans residues 598 to 1002; it reads LLYVIYKKPE…QENVLTFYCQ (405 aa). Positions 613-628 are scissor helix; sequence SVQAGSYNLALSYSVG. ATP is bound by residues Leu646, Arg653, Val675, Gly739, Leu778, and Asn779.

The protein belongs to the SLC12A transporter family. Homodimer; adopts a domain-swap conformation at the scissor helices connecting the transmembrane domain and C-terminal domain. Interacts with KLHL3. Interacts with IL18R1; this interaction is increased by IL18 treatment. In terms of processing, ubiquitinated; ubiquitination is essential for regulation of endocytosis. Phosphorylated at Thr-53, Thr-58 and Ser-71 by OXSR1/OSR1 and STK39/SPAK downstream of WNK4, promoting its activity. Phosphorylated in response to IL18. As to expression, expressed predominantly in kidney, including in distal tubules (at protein level). Detected at low levels in heart, lung and liver. Not detected in normal aorta, but abundantly expressed in fatty streaks and advanced atherosclerotic lesions. In atherosclerotic lesions, expressed in macrophages, smooth muscle cells and endothelial cells (at protein level).

It is found in the cell membrane. The protein localises to the apical cell membrane. It catalyses the reaction chloride(out) + Na(+)(out) = chloride(in) + Na(+)(in). With respect to regulation, phosphorylation by OXSR1/OSR1 and STK39/SPAK in kidney distal convoluted tubules promotes its activity. Also activated by OXSR1/OSR1 and STK39/SPAK downstream of WNK3. Inhibited by thiazide-type diuretic metolazone. Thiazide drugs, such as polythiazide, specifically inhibit SLC12A3/NCC transporter activity by competing with chloride for binding. In terms of biological role, electroneutral sodium and chloride ion cotransporter, which acts as a key mediator of sodium and chloride reabsorption in kidney distal convoluted tubules. Also acts as a receptor for the pro-inflammatory cytokine IL18, thereby contributing to IL18-induced cytokine production, including IFNG, IL6, IL18 and CCL2. May act either independently of IL18R1, or in a complex with IL18R1. The polypeptide is Solute carrier family 12 member 3 (Mus musculus (Mouse)).